The primary structure comprises 680 residues: DNA-directed RNA polymerase subunit beta' (680 aa).

Cys-69, Cys-71, Cys-87, and Cys-90 together coordinate Zn(2+). Positions 489, 491, and 493 each coordinate Mg(2+).

The protein belongs to the RNA polymerase beta' chain family. RpoC1 subfamily. In terms of assembly, in plastids the minimal PEP RNA polymerase catalytic core is composed of four subunits: alpha, beta, beta', and beta''. When a (nuclear-encoded) sigma factor is associated with the core the holoenzyme is formed, which can initiate transcription. Mg(2+) is required as a cofactor. The cofactor is Zn(2+).

Its subcellular location is the plastid. The protein resides in the chloroplast. It catalyses the reaction RNA(n) + a ribonucleoside 5'-triphosphate = RNA(n+1) + diphosphate. DNA-dependent RNA polymerase catalyzes the transcription of DNA into RNA using the four ribonucleoside triphosphates as substrates. This is DNA-directed RNA polymerase subunit beta' from Nasturtium officinale (Watercress).